The chain runs to 60 residues: Large ribosomal subunit protein bL32 (60 aa).

The segment covering 1 to 22 (MAVPKKKTSKSRRDMRRSHHAL) has biased composition (basic residues). Positions 1-27 (MAVPKKKTSKSRRDMRRSHHALKGSAY) are disordered.

It belongs to the bacterial ribosomal protein bL32 family.

This Rhodospirillum centenum (strain ATCC 51521 / SW) protein is Large ribosomal subunit protein bL32.